We begin with the raw amino-acid sequence, 255 residues long: tRNA pseudouridine synthase B (255 aa).

Asp-52 (nucleophile) is an active-site residue. Positions 80, 183, and 204 each coordinate substrate.

Belongs to the pseudouridine synthase TruB family. Type 1 subfamily.

It carries out the reaction uridine(55) in tRNA = pseudouridine(55) in tRNA. In terms of biological role, responsible for synthesis of pseudouridine from uracil-55 in the psi GC loop of transfer RNAs. The protein is tRNA pseudouridine synthase B of Blochmanniella floridana.